The primary structure comprises 701 residues: Elongation factor G (701 aa).

The 281-residue stretch at 6-286 (KFTRNIGIAA…YVMELLPSPL (281 aa)) folds into the tr-type G domain. Residues 15–22 (AHIDAGKT), 83–87 (DTPGH), and 137–140 (NKMD) contribute to the GTP site.

Belongs to the TRAFAC class translation factor GTPase superfamily. Classic translation factor GTPase family. EF-G/EF-2 subfamily.

The protein localises to the cytoplasm. Catalyzes the GTP-dependent ribosomal translocation step during translation elongation. During this step, the ribosome changes from the pre-translocational (PRE) to the post-translocational (POST) state as the newly formed A-site-bound peptidyl-tRNA and P-site-bound deacylated tRNA move to the P and E sites, respectively. Catalyzes the coordinated movement of the two tRNA molecules, the mRNA and conformational changes in the ribosome. The sequence is that of Elongation factor G from Cytophaga hutchinsonii (strain ATCC 33406 / DSM 1761 / CIP 103989 / NBRC 15051 / NCIMB 9469 / D465).